The chain runs to 250 residues: DNA repair protein RecO (250 aa).

This sequence belongs to the RecO family.

Involved in DNA repair and RecF pathway recombination. In Lactobacillus helveticus (strain DPC 4571), this protein is DNA repair protein RecO.